A 443-amino-acid chain; its full sequence is Xaa-Pro dipeptidase (443 aa).

Asp-246, Asp-257, His-339, Glu-384, and Glu-423 together coordinate Mn(2+).

It belongs to the peptidase M24B family. Bacterial-type prolidase subfamily. The cofactor is Mn(2+).

It catalyses the reaction Xaa-L-Pro dipeptide + H2O = an L-alpha-amino acid + L-proline. Its function is as follows. Splits dipeptides with a prolyl residue in the C-terminal position. This is Xaa-Pro dipeptidase from Edwardsiella ictaluri (strain 93-146).